The primary structure comprises 200 residues: NAD(P)H dehydrogenase (quinone) (200 aa).

In terms of domain architecture, Flavodoxin-like spans 7–199 (LAIVFYSSTG…RQVELTAKLL (193 aa)). FMN contacts are provided by residues 13-18 (SSTGTG), 86-88 (TRF), 121-127 (SAQNVNG), and His-142.

This sequence belongs to the WrbA family. As to quaternary structure, homotetramer. FMN serves as cofactor.

The catalysed reaction is a quinone + NADH + H(+) = a quinol + NAD(+). The enzyme catalyses a quinone + NADPH + H(+) = a quinol + NADP(+). The protein is NAD(P)H dehydrogenase (quinone) of Deinococcus radiodurans (strain ATCC 13939 / DSM 20539 / JCM 16871 / CCUG 27074 / LMG 4051 / NBRC 15346 / NCIMB 9279 / VKM B-1422 / R1).